The sequence spans 452 residues: NADH-ubiquinone oxidoreductase chain 4 (452 aa).

The next 14 helical transmembrane spans lie at 4–24 (LVLGYVGLVIGVIVTKKSMVW), 29–49 (VGSVLLMLPATVLVNMNMTIS), 59–79 (FVSLGLTVLSIWLLPLMLLAS), 88–110 (LIYQRVFVGCQVFLTGALVLAFM), 114–136 (LLLFYIAFESTLLPTLMLITRWG), 144–164 (AGTYFMFFTLVGSLPLLICLI), 182–202 (VFQLSYLVNFWWVGCILAFLV), 221–241 (PIAGSMVLAGVLLKLGGYGMM), 252–272 (MLSSEVFLALALWGIVVMGGI), 282–304 (LIAYSSVGHMALVVGGVLTGVAW), 309–331 (AMVLMIAHGLVSSCLFCLANLWY), 345–365 (LIMIFPLISSGWFLMSLMNMA), 390–410 (IVYMSLGAVLTAAYSLYLFGM), and 432–452 (LLTTLHLVPAIYLIFYLGLMF).

It belongs to the complex I subunit 4 family.

The protein resides in the mitochondrion membrane. The enzyme catalyses a ubiquinone + NADH + 5 H(+)(in) = a ubiquinol + NAD(+) + 4 H(+)(out). Functionally, core subunit of the mitochondrial membrane respiratory chain NADH dehydrogenase (Complex I) that is believed to belong to the minimal assembly required for catalysis. Complex I functions in the transfer of electrons from NADH to the respiratory chain. The immediate electron acceptor for the enzyme is believed to be ubiquinone. The polypeptide is NADH-ubiquinone oxidoreductase chain 4 (ND4) (Branchiostoma floridae (Florida lancelet)).